The following is a 752-amino-acid chain: Ribosomal protein S6 kinase 2 alpha (752 aa).

The Protein kinase 1 domain occupies 80–339; the sequence is FELLKVLGQG…AEEIKRHPFY (260 aa). ATP-binding positions include 86–94 and lysine 112; that span reads LGQGSFGKV. Residue aspartate 205 is the Proton acceptor of the active site. The residue at position 239 (serine 239) is a Phosphoserine. One can recognise an AGC-kinase C-terminal domain in the interval 340–409; sequence STIDWNKLYR…VATGLMEDSK (70 aa). The residue at position 377 (threonine 377) is a Phosphothreonine. Serine 381 is subject to Phosphoserine. Serine 398 carries the phosphoserine; by autocatalysis modification. One can recognise a Protein kinase 2 domain in the interval 435–692; it reads YVVKEAIGVG…AKQVLQHPWI (258 aa). ATP-binding positions include 441–449 and lysine 464; that span reads IGVGSYSVC. Aspartate 552 (proton acceptor) is an active-site residue. Threonine 590 is subject to Phosphothreonine. A Phosphoserine modification is found at serine 749.

This sequence belongs to the protein kinase superfamily. AGC Ser/Thr protein kinase family. S6 kinase subfamily. Mg(2+) serves as cofactor. Autophosphorylated on Ser-398, as part of the activation process. In terms of tissue distribution, small and large intestine, spleen, stomach, and bursa, and to a lesser extent lung and kidney.

The enzyme catalyses L-seryl-[protein] + ATP = O-phospho-L-seryl-[protein] + ADP + H(+). The catalysed reaction is L-threonyl-[protein] + ATP = O-phospho-L-threonyl-[protein] + ADP + H(+). Its activity is regulated as follows. Activated by multiple phosphorylations on threonine and serine residues. Its function is as follows. Serine/threonine kinase that may play a role in mediating the growth-factor and stress induced activation of transcription. This Gallus gallus (Chicken) protein is Ribosomal protein S6 kinase 2 alpha (RPS6KA).